Reading from the N-terminus, the 1479-residue chain is WASH complex subunit 2 (1479 aa).

Residues 1-17 (MPEEQPQQQQQPVREQP) show a composition bias toward low complexity. Disordered regions lie at residues 1–25 (MPEE…DVPW), 188–210 (GGLV…TEKK), 240–564 (FIED…GGVK), 576–1383 (FSGK…FDDI), and 1419–1479 (TSTT…NLFD). Residues 242 to 279 (EDSDSDSSDEEDEEDVDAEDGSDESSSESSSDDDDEKD) show a composition bias toward acidic residues. The segment covering 334–349 (SKKSSNSYTSSLSDIL) has biased composition (low complexity). Residues 422–431 (DDDLFGDSEE) show a composition bias toward acidic residues. Low complexity-rich tracts occupy residues 465-475 (TTTSSQPQQKK) and 514-532 (TPKP…TTTK). Thr-535 is subject to Phosphothreonine. Residues 542–552 (ASGSESTTGKS) show a composition bias toward polar residues. The span at 595–620 (TESKASEDDFFSSDKKSTSATKKDAE) shows a compositional bias: basic and acidic residues. Residues 709-723 (PKAPTTATTTTTTKP) are compositionally biased toward low complexity. Residues 765 to 781 (TETKKQPITEEPKKKQD) show a composition bias toward basic and acidic residues. Polar residues predominate over residues 802-814 (ASISPASPVSTIE). The segment covering 839 to 885 (DLTKDEPAKSEPTKVEPTKVEPTKAEPTKVEPAKVEPTKVESDKKES) has biased composition (basic and acidic residues). Polar residues predominate over residues 904–916 (KNPTTSSSTTATE). Low complexity predominate over residues 951–968 (SSTTKKSTTTTTTTTSSK). The span at 981-990 (KKVEEKKSSD) shows a compositional bias: basic and acidic residues. Composition is skewed to low complexity over residues 991-1000 (FDSFFSGSDD) and 1010-1021 (KTTTTPPLTSTT). The segment covering 1062–1075 (PLTSNNTKNRTKSI) has biased composition (polar residues). A compositionally biased stretch (basic and acidic residues) spans 1091 to 1107 (EKNRSESPTSEKAEPTK). Polar residues predominate over residues 1108–1123 (KTSNISSLQNKLSLNP). The span at 1147 to 1162 (STNNDNDSSATDLSDS) shows a compositional bias: low complexity. 2 stretches are compositionally biased toward polar residues: residues 1163–1174 (GRSSPSVTSPTL) and 1220–1236 (KSGT…TPTQ). Ser-1249 is subject to Phosphoserine. Residues 1277–1292 (EKTSSGKSSPSPTIKS) show a composition bias toward low complexity. The span at 1307–1317 (ASTTTKPTASE) shows a compositional bias: polar residues. The span at 1327 to 1358 (KKSEPETPKETPKETPKEKEQTKEKEQPKETP) shows a compositional bias: basic and acidic residues. Composition is skewed to low complexity over residues 1419 to 1445 (TSTT…AVDN) and 1452 to 1466 (NTTT…TPSK).

It belongs to the FAM21 family. Probable component of the WASH complex.

In Dictyostelium discoideum (Social amoeba), this protein is WASH complex subunit 2.